Here is a 1303-residue protein sequence, read N- to C-terminus: Alpha,alpha-trehalose-phosphate synthase [UDP-forming] 2 (1303 aa).

Disordered regions lie at residues 1–48 and 205–251; these read MTVV…NNTT and LQRR…FRGK. Residues 212–221 are compositionally biased toward low complexity; sequence SSRGGSLRGS.

The protein in the N-terminal section; belongs to the glycosyltransferase 20 family. It in the C-terminal section; belongs to the gob-1 trehalose phosphatase family.

The enzyme catalyses D-glucose 6-phosphate + UDP-alpha-D-glucose = alpha,alpha-trehalose 6-phosphate + UDP + H(+). In terms of biological role, catalyzes the production of trehalose from glucose-6-phosphate and UDP-alpha-D-glucose in a 2 step process. In Aphelenchoides avenae (Mycophagous nematode worm), this protein is Alpha,alpha-trehalose-phosphate synthase [UDP-forming] 2 (tps-2).